The following is a 462-amino-acid chain: Probable peptidoglycan glycosyltransferase FtsW (462 aa).

Residues methionine 1 to proline 63 lie on the Cytoplasmic side of the membrane. A helical transmembrane segment spans residues leucine 64–valine 84. Topologically, residues tyrosine 85–tyrosine 97 are periplasmic. The helical transmembrane segment at leucine 98 to leucine 118 threads the bilayer. The Cytoplasmic portion of the chain corresponds to cysteine 119–arginine 125. Residues arginine 126–glycine 146 form a helical membrane-spanning segment. The Periplasmic portion of the chain corresponds to arginine 147–proline 160. The helical transmembrane segment at leucine 161–phenylalanine 181 threads the bilayer. Over threonine 182–arginine 227 the chain is Cytoplasmic. 2 helical membrane passes run alanine 228–aspartate 248 and phenylalanine 249–proline 269. Over tryptophan 270–lysine 271 the chain is Cytoplasmic. Residues tyrosine 272–proline 292 form a helical membrane-spanning segment. Topologically, residues tyrosine 293–aspartate 348 are periplasmic. The chain crosses the membrane as a helical span at residues phenylalanine 349–cysteine 369. Residues tyrosine 370–aspartate 386 are Cytoplasmic-facing. Residues leucine 387–phenylalanine 409 form a helical membrane-spanning segment. The Periplasmic portion of the chain corresponds to asparagine 410–threonine 424. Residues leucine 425–leucine 445 form a helical membrane-spanning segment. Over leucine 446–glutamate 462 the chain is Cytoplasmic.

Belongs to the SEDS family. FtsW subfamily.

The protein resides in the cell inner membrane. It carries out the reaction [GlcNAc-(1-&gt;4)-Mur2Ac(oyl-L-Ala-gamma-D-Glu-L-Lys-D-Ala-D-Ala)](n)-di-trans,octa-cis-undecaprenyl diphosphate + beta-D-GlcNAc-(1-&gt;4)-Mur2Ac(oyl-L-Ala-gamma-D-Glu-L-Lys-D-Ala-D-Ala)-di-trans,octa-cis-undecaprenyl diphosphate = [GlcNAc-(1-&gt;4)-Mur2Ac(oyl-L-Ala-gamma-D-Glu-L-Lys-D-Ala-D-Ala)](n+1)-di-trans,octa-cis-undecaprenyl diphosphate + di-trans,octa-cis-undecaprenyl diphosphate + H(+). It participates in cell wall biogenesis; peptidoglycan biosynthesis. Functionally, peptidoglycan polymerase that is essential for cell division. The chain is Probable peptidoglycan glycosyltransferase FtsW from Neisseria gonorrhoeae (strain NCCP11945).